Here is a 172-residue protein sequence, read N- to C-terminus: Adenine phosphoribosyltransferase (172 aa).

Belongs to the purine/pyrimidine phosphoribosyltransferase family. As to quaternary structure, homodimer.

The protein localises to the cytoplasm. It carries out the reaction AMP + diphosphate = 5-phospho-alpha-D-ribose 1-diphosphate + adenine. The protein operates within purine metabolism; AMP biosynthesis via salvage pathway; AMP from adenine: step 1/1. Its function is as follows. Catalyzes a salvage reaction resulting in the formation of AMP, that is energically less costly than de novo synthesis. The chain is Adenine phosphoribosyltransferase from Gloeothece citriformis (strain PCC 7424) (Cyanothece sp. (strain PCC 7424)).